The following is a 110-amino-acid chain: MNLQKISKKIDLKKGAGLIPTIIQDFYSGQVLMLAYMNKESLEKTIETNTTWFWSRSREELWNKGATSGHFQYVKSIHIDCDGDALLIKVEQLGPACHTGNRSCFYTTLI.

Residue Asp-80 participates in Mg(2+) binding. Residue Cys-81 coordinates Zn(2+). 2 residues coordinate Mg(2+): Asp-82 and Asp-84. Residues Cys-97 and Cys-104 each coordinate Zn(2+).

The protein belongs to the PRA-CH family. In terms of assembly, homodimer. Requires Mg(2+) as cofactor. It depends on Zn(2+) as a cofactor.

The protein localises to the cytoplasm. The catalysed reaction is 1-(5-phospho-beta-D-ribosyl)-5'-AMP + H2O = 1-(5-phospho-beta-D-ribosyl)-5-[(5-phospho-beta-D-ribosylamino)methylideneamino]imidazole-4-carboxamide. Its pathway is amino-acid biosynthesis; L-histidine biosynthesis; L-histidine from 5-phospho-alpha-D-ribose 1-diphosphate: step 3/9. In terms of biological role, catalyzes the hydrolysis of the adenine ring of phosphoribosyl-AMP. This is Phosphoribosyl-AMP cyclohydrolase from Clostridium botulinum (strain Okra / Type B1).